The primary structure comprises 293 residues: MQIIHTIEELRQALAPARQQGKKIGFVPTMGYLHKGHLELVRRARVENDVTLVSIFVNPLQFGANEDLGRYPRDLERDAGLLHDAQVDYLFAPTVSDMYPRPMQTVVDVPPLGNQMEGEARPGHFAGVATVVSKLFNIVGPDAAYFGEKDFQQLVIIRRMVDDMAIPVRIVGVETVREDDGLACSSRNVYLTPEQRRAAIIVPQALDEADRLYRSGMDDPDALEAAIRTFIGRQPLAVPEVIAIRDPETLERLPALQGRPILVALFVRVGATRLLDNRVIGHAAPQITQERAA.

30 to 37 is a binding site for ATP; that stretch reads MGYLHKGH. Histidine 37 (proton donor) is an active-site residue. Glutamine 61 provides a ligand contact to (R)-pantoate. Glutamine 61 contacts beta-alanine. An ATP-binding site is contributed by 147–150; sequence GEKD. Residue glutamine 153 coordinates (R)-pantoate. Residues valine 176 and 184 to 187 contribute to the ATP site; that span reads CSSR.

It belongs to the pantothenate synthetase family. In terms of assembly, homodimer.

It localises to the cytoplasm. It carries out the reaction (R)-pantoate + beta-alanine + ATP = (R)-pantothenate + AMP + diphosphate + H(+). The protein operates within cofactor biosynthesis; (R)-pantothenate biosynthesis; (R)-pantothenate from (R)-pantoate and beta-alanine: step 1/1. In terms of biological role, catalyzes the condensation of pantoate with beta-alanine in an ATP-dependent reaction via a pantoyl-adenylate intermediate. This Brucella melitensis biotype 2 (strain ATCC 23457) protein is Pantothenate synthetase.